Consider the following 555-residue polypeptide: Glucose-6-phosphate isomerase (555 aa).

The active-site Proton donor is the Glu356. Catalysis depends on residues His387 and Lys515.

Belongs to the GPI family.

The protein localises to the cytoplasm. The catalysed reaction is alpha-D-glucose 6-phosphate = beta-D-fructose 6-phosphate. The protein operates within carbohydrate biosynthesis; gluconeogenesis. It participates in carbohydrate degradation; glycolysis; D-glyceraldehyde 3-phosphate and glycerone phosphate from D-glucose: step 2/4. Catalyzes the reversible isomerization of glucose-6-phosphate to fructose-6-phosphate. The chain is Glucose-6-phosphate isomerase from Desulforapulum autotrophicum (strain ATCC 43914 / DSM 3382 / VKM B-1955 / HRM2) (Desulfobacterium autotrophicum).